Here is a 333-residue protein sequence, read N- to C-terminus: Olfactory receptor 1078 (333 aa).

The Extracellular portion of the chain corresponds to 1-25; sequence MDSSNRTRVSEFLLLGFVENKDLQP. The N-linked (GlcNAc...) asparagine glycan is linked to Asn5. The helical transmembrane segment at 26-50 threads the bilayer; it reads LIYGLFLSMYLVTVIGNISIIVAII. Residues 51–57 lie on the Cytoplasmic side of the membrane; it reads SDPCLHT. A helical transmembrane segment spans residues 58-79; sequence PMYFFLSNLSFVDICFISTTVP. Over 80 to 100 the chain is Extracellular; that stretch reads KMLVNIQTQNNVITYAGCITQ. Residues Cys97 and Cys189 are joined by a disulfide bond. The chain crosses the membrane as a helical span at residues 101 to 120; the sequence is IYFFLLFVELDNFLLTIMAY. The Cytoplasmic portion of the chain corresponds to 121 to 139; it reads DRYVAICHPMHYTVIMNYK. Residues 140–158 traverse the membrane as a helical segment; it reads LCGFLVLVSWIVSVLHALF. Over 159–196 the chain is Extracellular; it reads QSLMMLALPFCTHLEIPHYFCEPNQVIQLTCSDAFLND. The chain crosses the membrane as a helical span at residues 197-219; the sequence is LVIYFTLVLLATVPLAGIFYSYF. Residues 220 to 236 are Cytoplasmic-facing; that stretch reads KIVSSICAISSVHGKYK. The chain crosses the membrane as a helical span at residues 237–260; it reads AFSTCASHLSVVSLFYCTGLGVYL. The Extracellular segment spans residues 261–272; it reads SSAANNSSQASA. A helical membrane pass occupies residues 273–292; that stretch reads TASVMYTVVTPMVNPFIYSL. The Cytoplasmic segment spans residues 293–333; that stretch reads RNKDVKSVLKKTLCEEVIRSPPSLLHFFLVLCHLPCFIFCY.

This sequence belongs to the G-protein coupled receptor 1 family. In terms of tissue distribution, olfactory epithelium.

The protein localises to the cell membrane. Odorant receptor. The protein is Olfactory receptor 1078 (Olr1078) of Rattus norvegicus (Rat).